A 250-amino-acid chain; its full sequence is MLAKRIIPCLDIKDGQTVKGTNFVNLRQAGDPVELGRAYSEQGADELVFLDITASHEGRKTFAELVRRIAANISIPFTVGGGINELSDVDRLLNAGADKISINSSAIRNPQLIDDIAKHFGSQVCVLAVDARQTGNGWKCYLNGGRIETDKELRTWTKEAQERGAGEVLFTSMNHDGVKTGYANEALAELASQLSIPVIASGGAGRMEHFRDAFTLGKADAALAASVFHFGEIKIPELKSYLCGQGITVR.

Residues Asp-11 and Asp-130 contribute to the active site.

It belongs to the HisA/HisF family. Heterodimer of HisH and HisF.

Its subcellular location is the cytoplasm. The enzyme catalyses 5-[(5-phospho-1-deoxy-D-ribulos-1-ylimino)methylamino]-1-(5-phospho-beta-D-ribosyl)imidazole-4-carboxamide + L-glutamine = D-erythro-1-(imidazol-4-yl)glycerol 3-phosphate + 5-amino-1-(5-phospho-beta-D-ribosyl)imidazole-4-carboxamide + L-glutamate + H(+). Its pathway is amino-acid biosynthesis; L-histidine biosynthesis; L-histidine from 5-phospho-alpha-D-ribose 1-diphosphate: step 5/9. Its function is as follows. IGPS catalyzes the conversion of PRFAR and glutamine to IGP, AICAR and glutamate. The HisF subunit catalyzes the cyclization activity that produces IGP and AICAR from PRFAR using the ammonia provided by the HisH subunit. In Bacteroides fragilis (strain ATCC 25285 / DSM 2151 / CCUG 4856 / JCM 11019 / LMG 10263 / NCTC 9343 / Onslow / VPI 2553 / EN-2), this protein is Imidazole glycerol phosphate synthase subunit HisF.